The following is a 291-amino-acid chain: Lipoyl synthase 1 (291 aa).

[4Fe-4S] cluster-binding residues include cysteine 34, cysteine 39, cysteine 45, cysteine 60, cysteine 64, cysteine 67, and serine 274. The Radical SAM core domain maps to 46-263; the sequence is FQAGTATFLI…QVYGEELGFL (218 aa).

This sequence belongs to the radical SAM superfamily. Lipoyl synthase family. Requires [4Fe-4S] cluster as cofactor.

The protein localises to the cytoplasm. The enzyme catalyses [[Fe-S] cluster scaffold protein carrying a second [4Fe-4S](2+) cluster] + N(6)-octanoyl-L-lysyl-[protein] + 2 oxidized [2Fe-2S]-[ferredoxin] + 2 S-adenosyl-L-methionine + 4 H(+) = [[Fe-S] cluster scaffold protein] + N(6)-[(R)-dihydrolipoyl]-L-lysyl-[protein] + 4 Fe(3+) + 2 hydrogen sulfide + 2 5'-deoxyadenosine + 2 L-methionine + 2 reduced [2Fe-2S]-[ferredoxin]. It participates in protein modification; protein lipoylation via endogenous pathway; protein N(6)-(lipoyl)lysine from octanoyl-[acyl-carrier-protein]: step 2/2. Catalyzes the radical-mediated insertion of two sulfur atoms into the C-6 and C-8 positions of the octanoyl moiety bound to the lipoyl domains of lipoate-dependent enzymes, thereby converting the octanoylated domains into lipoylated derivatives. The sequence is that of Lipoyl synthase 1 from Nostoc sp. (strain PCC 7120 / SAG 25.82 / UTEX 2576).